We begin with the raw amino-acid sequence, 215 residues long: Probable phosphoglycerate mutase GpmB (215 aa).

Residues 8–15 (RHGETQWN), 21–22 (QG), arginine 58, 82–85 (ELDM), 104–105 (RR), and 151–152 (GM) contribute to the substrate site. The active-site Tele-phosphohistidine intermediate is the histidine 9. Glutamate 82 serves as the catalytic Proton donor/acceptor.

This sequence belongs to the phosphoglycerate mutase family. GpmB subfamily.

The catalysed reaction is (2R)-2-phosphoglycerate = (2R)-3-phosphoglycerate. It participates in carbohydrate degradation; glycolysis; pyruvate from D-glyceraldehyde 3-phosphate: step 3/5. The sequence is that of Probable phosphoglycerate mutase GpmB from Cronobacter sakazakii (strain ATCC BAA-894) (Enterobacter sakazakii).